We begin with the raw amino-acid sequence, 304 residues long: N-acetyl-D-glucosamine kinase (304 aa).

ATP-binding positions include Gly4–Lys11 and Gly133–Val140. Zn(2+) contacts are provided by His157, Cys177, Cys179, and Cys184.

This sequence belongs to the ROK (NagC/XylR) family. NagK subfamily.

The enzyme catalyses N-acetyl-D-glucosamine + ATP = N-acetyl-D-glucosamine 6-phosphate + ADP + H(+). The protein operates within cell wall biogenesis; peptidoglycan recycling. Its function is as follows. Catalyzes the phosphorylation of N-acetyl-D-glucosamine (GlcNAc) derived from cell-wall degradation, yielding GlcNAc-6-P. This chain is N-acetyl-D-glucosamine kinase, found in Yersinia pseudotuberculosis serotype IB (strain PB1/+).